A 217-amino-acid chain; its full sequence is ATP phosphoribosyltransferase (217 aa).

This sequence belongs to the ATP phosphoribosyltransferase family. Short subfamily. In terms of assembly, heteromultimer composed of HisG and HisZ subunits.

It is found in the cytoplasm. It carries out the reaction 1-(5-phospho-beta-D-ribosyl)-ATP + diphosphate = 5-phospho-alpha-D-ribose 1-diphosphate + ATP. It participates in amino-acid biosynthesis; L-histidine biosynthesis; L-histidine from 5-phospho-alpha-D-ribose 1-diphosphate: step 1/9. Catalyzes the condensation of ATP and 5-phosphoribose 1-diphosphate to form N'-(5'-phosphoribosyl)-ATP (PR-ATP). Has a crucial role in the pathway because the rate of histidine biosynthesis seems to be controlled primarily by regulation of HisG enzymatic activity. The protein is ATP phosphoribosyltransferase of Burkholderia multivorans (strain ATCC 17616 / 249).